A 131-amino-acid polypeptide reads, in one-letter code: Small ribosomal subunit protein uS12 (131 aa).

Asp89 carries the post-translational modification 3-methylthioaspartic acid.

It belongs to the universal ribosomal protein uS12 family. As to quaternary structure, part of the 30S ribosomal subunit. Contacts proteins S8 and S17. May interact with IF1 in the 30S initiation complex.

With S4 and S5 plays an important role in translational accuracy. In terms of biological role, interacts with and stabilizes bases of the 16S rRNA that are involved in tRNA selection in the A site and with the mRNA backbone. Located at the interface of the 30S and 50S subunits, it traverses the body of the 30S subunit contacting proteins on the other side and probably holding the rRNA structure together. The combined cluster of proteins S8, S12 and S17 appears to hold together the shoulder and platform of the 30S subunit. This chain is Small ribosomal subunit protein uS12, found in Karelsulcia muelleri (strain GWSS) (Sulcia muelleri).